The sequence spans 220 residues: Adenylate kinase (220 aa).

Glycine 10–threonine 15 serves as a coordination point for ATP. The interval serine 30–valine 59 is NMP. AMP contacts are provided by residues threonine 31, arginine 36, lysine 57–valine 59, glycine 85–arginine 88, and glutamine 92. The segment at glycine 122–aspartate 159 is LID. ATP contacts are provided by residues arginine 123 and threonine 132–tyrosine 133. The AMP site is built by arginine 156 and arginine 167. Residue glycine 206 participates in ATP binding.

The protein belongs to the adenylate kinase family. As to quaternary structure, monomer.

The protein localises to the cytoplasm. The enzyme catalyses AMP + ATP = 2 ADP. The protein operates within purine metabolism; AMP biosynthesis via salvage pathway; AMP from ADP: step 1/1. Catalyzes the reversible transfer of the terminal phosphate group between ATP and AMP. Plays an important role in cellular energy homeostasis and in adenine nucleotide metabolism. This Burkholderia multivorans (strain ATCC 17616 / 249) protein is Adenylate kinase.